We begin with the raw amino-acid sequence, 1334 residues long: MPSHSKNKKRKSKSKGGSTVKKSGGLLEKGIGNITAELYNDTDDYPTSRVIKRAPNGDVIVESLPTKPKKSKSRQTNSSSNNDMILDLDSHWEWLSPEEKKNILRIDKDEVFEMLSRYNNHNSNNVNGNTNNNNIIGTGSNNLSGGISTNSNNNTSSSCNCNVCGRRHMAMDQEMERIYNRLYEMQRENYEDMTHIKFHLNIIKDLQKRKTQMISPPASPEMDSNNVDEAREPNSGSSNESLDIKNDLETMRDEVVKYFLSPNSVDTLKKEVLNFKHNKQKQFQTPISLNEDNTEEVVEDNEAQHIYDDLSNEIHDSGLIESPRTVEDDANIIDIESKSRYLNFAKTFISSHPTIAQEYVNKMIMYPEMKELTDDLMNNNGSGFIKAIEEFVLDKQKQNTLPDTEIDINDVNSQQHENPEEALQVQDLGDAKEFTTMLHNGQPLTSDEYANLQRHIAERVTDAYNTETKEFEGISQLEKELFTRFMHGSDRRQFGDSILQLFKNKYDDKLSANSISTSLAAAASTITHDIISPRNDDGNDTEEDIDYYDDEDDVSSENIHHRNDLDDDFKSREEYSDYNSDFHDNRKCEKYNDFDDDDDYLDNNRNLECAHAEHNHETLSTYHHDVDLADSNSHGYKNYASHHTSSQVSEDYIDDIDDDGYESGIDENERLEEGRKLLQITITKILQRRIMESYHAKQAENNRMKLLEELEAEESKKKEKEEKKQRKREKEKEKKRLLQVAKEEERKKKEEEAERLKKEAEEREMERRETQRKKVEAAKKKKDEEKKRKLEEQRKREEEQERQRKIKEEQKRKKDEERKQKELEKKKKDEEKRIQEEEKRKKEEEAEQKTLNEKKRLDVEIMEQKRLEEEEKRLKSTASTSNVPYAELLKMTPSLQPVSGNINDELFGMINAATSSQSIPTSSSHLNHLLQQNDASHFNMTPRHDLLNPSGGMHFGPSDLIEQSHFTHKSNSFDTLAAINDPTTPQTTLPYGNSSVPPNSFDISSWGNFNGSSTAETQLQSQLPQQSLLGSHSVTSDQNRKSFNEELNTITNLLSTTGLEDQLSQKDSFAHSSLWGSQGTSLSGSNPNLSSNFAPAGLPINQTPISPGNIGIPTTTHRSSIWDISSGVDYSLNDNKITGSIQSERPLSNVIPSSYMSPNIWSGGTSKIPVIEQPLVFNPNENQTNPISNIILRELSLLTLPNSTDQYVSSELLCQKVMANRIDYGVYFTELMNLRNAHKIEIASNDNGQVTHVKLVYKSKDELEMPLNSSENQNSHIQMQQNYGLQPISSTTAGNTASTTANNANGSTINTSNSHFFNINKTISNPSVTANIWS.

A compositionally biased stretch (basic residues) spans 1 to 14 (MPSHSKNKKRKSKS). Disordered stretches follow at residues 1-82 (MPSH…SSNN), 212-242 (QMIS…NESL), 530-565 (IISP…RNDL), 712-849 (AEES…AEQK), and 977-996 (AAIN…NSSV). Low complexity predominate over residues 15–25 (KGGSTVKKSGG). Residues 538-555 (GNDTEEDIDYYDDEDDVS) are compositionally biased toward acidic residues. A coiled-coil region spans residues 694–876 (YHAKQAENNR…LEEEEKRLKS (183 aa)). The span at 981 to 996 (DPTTPQTTLPYGNSSV) shows a compositional bias: polar residues.

Belongs to the NST1 family.

It is found in the cytoplasm. Functionally, may act as a negative regulator of salt tolerance. This Vanderwaltozyma polyspora (strain ATCC 22028 / DSM 70294 / BCRC 21397 / CBS 2163 / NBRC 10782 / NRRL Y-8283 / UCD 57-17) (Kluyveromyces polysporus) protein is Stress response protein NST1 (NST1).